The chain runs to 395 residues: Phosphoglycerate kinase (395 aa).

Substrate contacts are provided by residues 21–23, R36, 59–62, R113, and R146; these read DLN and HLGR. ATP-binding positions include K197, E324, and 350-353; that span reads GGDT.

This sequence belongs to the phosphoglycerate kinase family. Monomer.

Its subcellular location is the cytoplasm. The enzyme catalyses (2R)-3-phosphoglycerate + ATP = (2R)-3-phospho-glyceroyl phosphate + ADP. Its pathway is carbohydrate degradation; glycolysis; pyruvate from D-glyceraldehyde 3-phosphate: step 2/5. This is Phosphoglycerate kinase from Acinetobacter baumannii (strain ACICU).